A 342-amino-acid chain; its full sequence is Cell cycle control protein 50C (342 aa).

Residues 1-33 (MEMMPQYDLSRLPENTALKQQTLPTQQLNLSAS) lie on the Cytoplasmic side of the membrane. Residues 34–54 (VVLSIFFITGGFCLSIGIILL) form a helical membrane-spanning segment. Residues 55 to 306 (LSAKSTKKIE…STLTWIGGGG (252 aa)) are Extracellular-facing. N-linked (GlcNAc...) asparagine glycosylation is found at Asn-66, Asn-80, Asn-89, and Asn-205. A helical membrane pass occupies residues 307-327 (LFLGLTYTVTGALTLLASFAI). The Cytoplasmic portion of the chain corresponds to 328–342 (LTIHLMLKRSKLNFL).

Belongs to the CDC50/LEM3 family. Specifically expressed in testis.

Its subcellular location is the membrane. This chain is Cell cycle control protein 50C (Tmem30c), found in Mus musculus (Mouse).